A 147-amino-acid chain; its full sequence is MALLQPARIRILAIGKLKRAWVAEGVAFYRKRLPGLEVVELKDSTPAKEAEAIRAARKPAERLVLLSEEGRQLSSVGLAELLGGWASERLALVIGGADGHDPTLKQQADVLLSLSELTFPHELARLMLVEQLYRASTILQGGPYHRS.

S-adenosyl-L-methionine contacts are provided by residues Leu-66, Gly-95, and 114-119 (LSELTF).

Belongs to the RNA methyltransferase RlmH family. In terms of assembly, homodimer.

Its subcellular location is the cytoplasm. It carries out the reaction pseudouridine(1915) in 23S rRNA + S-adenosyl-L-methionine = N(3)-methylpseudouridine(1915) in 23S rRNA + S-adenosyl-L-homocysteine + H(+). Its function is as follows. Specifically methylates the pseudouridine at position 1915 (m3Psi1915) in 23S rRNA. The polypeptide is Ribosomal RNA large subunit methyltransferase H (Synechococcus sp. (strain RCC307)).